The chain runs to 820 residues: Leucine--tRNA ligase (820 aa).

A 'HIGH' region motif is present at residues 40–51; that stretch reads PYPSGAGLHVGH. A 'KMSKS' region motif is present at residues 601-605; sequence KMSKS. Residue Lys-604 participates in ATP binding.

Belongs to the class-I aminoacyl-tRNA synthetase family.

It localises to the cytoplasm. It carries out the reaction tRNA(Leu) + L-leucine + ATP = L-leucyl-tRNA(Leu) + AMP + diphosphate. The polypeptide is Leucine--tRNA ligase (Chlamydia abortus (strain DSM 27085 / S26/3) (Chlamydophila abortus)).